The following is a 1941-amino-acid chain: Integrin beta-like protein B (1941 aa).

A signal peptide spans 1 to 20 (MKNIIKYLFIFLCFLIITEA). The Extracellular segment spans residues 21–1871 (THFRYGTISW…VTTQNSSNKT (1851 aa)). One can recognise an EGF-like domain in the interval 420-457 (YGDKCTVLPPCKNGVPNGGVNGDGKCLCNNGWTGSDCS). Disulfide bonds link cysteine 430/cysteine 445 and cysteine 447/cysteine 456. In terms of domain architecture, VWFA spans 513 to 696 (DVYLLVDANM…AGIKAVSSKL (184 aa)). Residues asparagine 1400, asparagine 1505, asparagine 1530, asparagine 1606, asparagine 1652, asparagine 1738, asparagine 1777, asparagine 1848, asparagine 1866, and asparagine 1869 are each glycosylated (N-linked (GlcNAc...) asparagine). A helical transmembrane segment spans residues 1872 to 1892 (VLSGAIAGAAAGTALIAAAMW). Topologically, residues 1893 to 1941 (KMLRKAAPPTDAFFDEGAFLGDGVNSNPMYQESKNGGENPLYLASNETL) are cytoplasmic. Residues 1921-1941 (MYQESKNGGENPLYLASNETL) are disordered.

Belongs to the SIB family. In terms of assembly, interacts with talA/talin.

The protein resides in the membrane. Functionally, implicated in cellular adhesion. The sequence is that of Integrin beta-like protein B (sibB) from Dictyostelium discoideum (Social amoeba).